An 893-amino-acid polypeptide reads, in one-letter code: DNA mismatch repair protein MutS (893 aa).

631–638 lines the ATP pocket; that stretch reads GPNMAGKS. Positions 821–858 are disordered; that stretch reads AGRPRVAVRQPQGGRRGASTGQLGLFGMEPAQGGTGVT.

It belongs to the DNA mismatch repair MutS family.

In terms of biological role, this protein is involved in the repair of mismatches in DNA. It is possible that it carries out the mismatch recognition step. This protein has a weak ATPase activity. This is DNA mismatch repair protein MutS from Myxococcus xanthus (strain DK1622).